Here is a 672-residue protein sequence, read N- to C-terminus: Nuclear hormone receptor family member nhr-5 (672 aa).

Over residues 1–19 (MSSGGNSSNVNRNSGSSNV) the composition is skewed to low complexity. The interval 1–38 (MSSGGNSSNVNRNSGSSNVITLNDSDEETEDSNLGSSS) is disordered. Residues 40–115 (TNLCKVCGAE…EGMNPAYVRP (76 aa)) constitute a DNA-binding region (nuclear receptor). 2 consecutive NR C4-type zinc fingers follow at residues 43-63 (CKVC…CVGC) and 79-98 (CAAN…CRSC). The NR LBD domain maps to 155-424 (EMRTILMTLL…PLLTDLFGCF (270 aa)). Positions 550–577 (NIQGPSHLPQCGSTVTQRPTVPSSTTSS) are disordered. Low complexity predominate over residues 562 to 577 (STVTQRPTVPSSTTSS).

It belongs to the nuclear hormone receptor family.

Its subcellular location is the nucleus. Orphan nuclear receptor. This is Nuclear hormone receptor family member nhr-5 (nhr-5) from Caenorhabditis elegans.